A 23-amino-acid chain; its full sequence is Protein male-specific 40 (23 aa).

In terms of tissue distribution, during early embryogenesis expression is initially detected at the early cleavage stages in the nucleus of two discrete cells. Subsequently, expression is abundant in the cytoplasm of the newly formed pole cells. Male-specific expression during the third larval instar.

The protein localises to the cytoplasm. It is found in the nucleus. The sequence is that of Protein male-specific 40 from Drosophila melanogaster (Fruit fly).